We begin with the raw amino-acid sequence, 163 residues long: Pheromone-binding protein 1 (163 aa).

The signal sequence occupies residues 1 to 21 (MLGKISLLLLPVFVAINLVHS). 3 disulfide bridges follow: Cys40-Cys75, Cys71-Cys129, and Cys118-Cys138.

Belongs to the PBP/GOBP family. As to expression, antenna.

This major soluble protein in olfactory sensilla of male moths might serve to solubilize the extremely hydrophobic pheromone molecules and to transport pheromone through the aqueous lymph to receptors located on olfactory cilia. This is Pheromone-binding protein 1 from Antheraea pernyi (Chinese oak silk moth).